The chain runs to 475 residues: Aspartate ammonia-lyase (475 aa).

The L-aspartate site is built by T104, S143, T144, N145, T190, and H191. Positions 320–329 (GSSIMPGKVN) are SS loop. The active-site Proton acceptor is S321. L-aspartate-binding residues include S322 and K327.

The protein belongs to the class-II fumarase/aspartase family. Aspartase subfamily. As to quaternary structure, homotetramer.

It catalyses the reaction L-aspartate = fumarate + NH4(+). In terms of biological role, catalyzes the reversible conversion of L-aspartate to fumarate and ammonia. This Bacillus subtilis (strain 168) protein is Aspartate ammonia-lyase.